The primary structure comprises 404 residues: Intracellular hyaluronan-binding protein 4.L (404 aa).

Disordered regions lie at residues 1 to 21, 51 to 288, and 359 to 379; these read MRLD…MQDN, LTRR…QEMS, and LTRP…REEA. Over residues 8 to 19 the composition is skewed to polar residues; sequence ETPSSPVNTEMQ. Composition is skewed to basic and acidic residues over residues 71–81, 145–159, and 165–184; these read GKKESQKDRKA, KVDR…REVR, and RSNE…DKQM. A compositionally biased stretch (gly residues) spans 188 to 200; it reads GGRGGMRGRGRGG. Basic and acidic residues-rich tracts occupy residues 205 to 233 and 270 to 281; these read TEND…DKRG and EEHAKVPEEKNE.

Belongs to the SERBP1-HABP4 family. Associates with ribosomes; promoting ribosome stabilization. Interacts with eef2/eEF2; promoting ribosome stabilization.

The protein resides in the nucleus. It localises to the cytoplasm. It is found in the stress granule. Its subcellular location is the nucleolus. The protein localises to the nucleus speckle. The protein resides in the cajal body. Functionally, ribosome-binding protein that promotes ribosome hibernation, a process during which ribosomes are stabilized in an inactive state and preserved from proteasomal degradation. Acts via its association with eef2/eEF2 factor at the A-site of the ribosome, promoting ribosome stabilization in an inactive state compatible with storage. Plays a key role in ribosome hibernation in the mature egg by promoting ribosome stabilization. Ribosomes, which are produced in large quantities during oogenesis, are stored and translationally repressed in the egg and early embryo. In Xenopus laevis (African clawed frog), this protein is Intracellular hyaluronan-binding protein 4.L.